Reading from the N-terminus, the 256-residue chain is Peroxisomal membrane protein PMP30A (256 aa).

It belongs to the peroxin-11 family.

It is found in the peroxisome membrane. Its function is as follows. Involved in peroxisomal proliferation. Could participate in peroxisomal elongation or fission. May be involved in parceling of peroxisomes into regular quanta. This is Peroxisomal membrane protein PMP30A (PEX11A) from Candida boidinii (Yeast).